The primary structure comprises 225 residues: NAD(P)H-quinone oxidoreductase subunit K, chloroplastic (225 aa).

[4Fe-4S] cluster-binding residues include cysteine 43, cysteine 44, cysteine 108, and cysteine 139.

This sequence belongs to the complex I 20 kDa subunit family. NDH is composed of at least 16 different subunits, 5 of which are encoded in the nucleus. Requires [4Fe-4S] cluster as cofactor.

Its subcellular location is the plastid. The protein localises to the chloroplast thylakoid membrane. It carries out the reaction a plastoquinone + NADH + (n+1) H(+)(in) = a plastoquinol + NAD(+) + n H(+)(out). It catalyses the reaction a plastoquinone + NADPH + (n+1) H(+)(in) = a plastoquinol + NADP(+) + n H(+)(out). Functionally, NDH shuttles electrons from NAD(P)H:plastoquinone, via FMN and iron-sulfur (Fe-S) centers, to quinones in the photosynthetic chain and possibly in a chloroplast respiratory chain. The immediate electron acceptor for the enzyme in this species is believed to be plastoquinone. Couples the redox reaction to proton translocation, and thus conserves the redox energy in a proton gradient. The polypeptide is NAD(P)H-quinone oxidoreductase subunit K, chloroplastic (Daucus carota (Wild carrot)).